The chain runs to 251 residues: RNA polymerase sigma factor SigI (251 aa).

The Polymerase core binding motif lies at 61 to 74 (DEFSIGLIAFNEAI). Residues 206 to 225 (VKQLEQLVSVSRKTIERNRK) constitute a DNA-binding region (H-T-H motif).

It belongs to the sigma-70 factor family. SigI subfamily. As to quaternary structure, interacts with RsgI.

The protein resides in the cytoplasm. Its activity is regulated as follows. Negatively regulated by the anti-sigma-I factor RsgI. Upon exposure to heat, SigI is released from RsgI and activated. Transient heat activation of SigI may depend upon DnaK chaperone. Its function is as follows. Sigma factors are initiation factors that promote the attachment of RNA polymerase to specific initiation sites and are then released. This sigma factor is involved in regulation of cell wall metabolism in response to heat stress. Acts by regulating the expression of genes such as bcrC, mreBH and lytE. Also plays a role in survival at low temperatures. The chain is RNA polymerase sigma factor SigI from Bacillus subtilis (strain 168).